The chain runs to 516 residues: 2-isopropylmalate synthase (516 aa).

Residues 10–271 (IRIFDTTLRD…TTGIDTRELA (262 aa)) enclose the Pyruvate carboxyltransferase domain. Residues Asp19, His205, His207, and Asn241 each contribute to the Mn(2+) site. Positions 396–516 (ELVSFRVEAG…REKASNRETP (121 aa)) are regulatory domain.

Belongs to the alpha-IPM synthase/homocitrate synthase family. LeuA type 1 subfamily. Homodimer. The cofactor is Mn(2+).

Its subcellular location is the cytoplasm. It catalyses the reaction 3-methyl-2-oxobutanoate + acetyl-CoA + H2O = (2S)-2-isopropylmalate + CoA + H(+). It functions in the pathway amino-acid biosynthesis; L-leucine biosynthesis; L-leucine from 3-methyl-2-oxobutanoate: step 1/4. Functionally, catalyzes the condensation of the acetyl group of acetyl-CoA with 3-methyl-2-oxobutanoate (2-ketoisovalerate) to form 3-carboxy-3-hydroxy-4-methylpentanoate (2-isopropylmalate). In Acidimicrobium ferrooxidans (strain DSM 10331 / JCM 15462 / NBRC 103882 / ICP), this protein is 2-isopropylmalate synthase.